Reading from the N-terminus, the 100-residue chain is NADH-quinone oxidoreductase subunit K (100 aa).

Transmembrane regions (helical) follow at residues V4–L24, L29–F49, and I61–I81.

Belongs to the complex I subunit 4L family. NDH-1 is composed of 14 different subunits. Subunits NuoA, H, J, K, L, M, N constitute the membrane sector of the complex.

The protein localises to the cell inner membrane. It catalyses the reaction a quinone + NADH + 5 H(+)(in) = a quinol + NAD(+) + 4 H(+)(out). NDH-1 shuttles electrons from NADH, via FMN and iron-sulfur (Fe-S) centers, to quinones in the respiratory chain. The immediate electron acceptor for the enzyme in this species is believed to be ubiquinone. Couples the redox reaction to proton translocation (for every two electrons transferred, four hydrogen ions are translocated across the cytoplasmic membrane), and thus conserves the redox energy in a proton gradient. This chain is NADH-quinone oxidoreductase subunit K, found in Anaeromyxobacter sp. (strain Fw109-5).